Here is a 1426-residue protein sequence, read N- to C-terminus: A disintegrin and metalloproteinase with thrombospondin motifs 13 (1426 aa).

An N-terminal signal peptide occupies residues 1–33; sequence MSQLCLWLTCQPCYAVSVRGILTGAIFILGCWG. A propeptide spanning residues 34-76 is cleaved from the precursor; it reads LSDFQKSLLQDLEPKDVSSYFGHHAAPFTGHPPSHLQRLRRRR. The Peptidase M12B domain maps to 74–291; it reads RRRTLEDILH…GQMHCFQDPP (218 aa). Ca(2+) is bound at residue Glu85. N-linked (GlcNAc...) asparagine glycosylation is found at Asn144 and Asn148. Intrachain disulfides connect Cys157/Cys210, Cys204/Cys286, and Cys246/Cys270. Ca(2+)-binding residues include Asp175, Asp184, Glu186, Asp189, and Glu214. Position 226 (His226) interacts with Zn(2+). Glu227 is a catalytic residue. Zn(2+) is bound by residues His230 and His236. Positions 281 and 289 each coordinate Ca(2+). Positions 295-388 constitute a Disintegrin domain; that stretch reads SGLTRHQLMA…LAELAPVAAV (94 aa). 11 cysteine pairs are disulfide-bonded: Cys316–Cys342, Cys327–Cys352, Cys337–Cys371, Cys365–Cys376, Cys401–Cys438, Cys405–Cys443, Cys416–Cys428, Cys488–Cys527, Cys513–Cys532, Cys537–Cys553, and Cys550–Cys560. Residues 389-444 form the TSP type-1 1 domain; that stretch reads HGHWSSWGPHSPCSRSCGGGVITRRRWCNNPRPAFGGRACVGEDLQAKMCNTQACE. Residues 445 to 561 are cysteine-rich; the sequence is KTQLEFMSEQ…VCGGDNSTCS (117 aa). The Cell attachment site motif lies at 503–505; it reads RGD. The tract at residues 556-685 is spacer; it reads DNSTCSSRNG…PDITFSYFQL (130 aa). N-linked (GlcNAc...) asparagine glycans are attached at residues Asn557, Asn564, Asn584, and Asn619. TSP type-1 domains follow at residues 687-746, 747-810, 808-871, 904-957, 958-1019, 1020-1078, and 1079-1137; these read QQAA…VSAP, CSPY…QPCP, PCPT…SLCS, WTPL…RARP, CPAR…EPCP, ARWK…IADC, and AFRW…GPCA. Residues Ser703 and Ser762 are each glycosylated (O-linked (Fuc...) serine). Asn834 is a glycosylation site (N-linked (GlcNAc...) asparagine). Ser914 is a glycosylation site (O-linked (Fuc...) serine). Residue Thr973 is glycosylated (O-linked (Fuc...) threonine). A glycan (O-linked (Fuc...) serine) is linked at Ser1033. Asn1057 carries N-linked (GlcNAc...) asparagine glycosylation. An O-linked (Fuc...) serine glycan is attached at Ser1093. 2 CUB domains span residues 1195–1302 and 1293–1426; these read ACGR…FYKE and QPAP…LALS.

Requires Zn(2+) as cofactor. Ca(2+) is required as a cofactor. In terms of processing, the precursor is processed by a furin endopeptidase which cleaves off the pro-domain. O-glycosylated. O-fucosylated by POFUT2 on a serine or a threonine residue found within the consensus sequence C1-X(2)-(S/T)-C2-G of the TSP type-1 repeat domains where C1 and C2 are the first and second cysteine residue of the repeat, respectively. Fucosylated repeats can then be further glycosylated by the addition of a beta-1,3-glucose residue by the glucosyltransferase, B3GALTL. Fucosylation mediates the efficient secretion of ADAMTS13. May also be C-glycosylated on tryptophan residues within the consensus sequence W-X-X-W of the TPRs, and also N-glycosylated. These other glycosylations can also facilitate secretion. In terms of tissue distribution, plasma. Expression is consistently high in liver, medium in lung and spleen, low in skeletal muscle and undetectable in heart, brain, kidney and testis.

The protein resides in the secreted. The catalysed reaction is The enzyme cleaves the von Willebrand factor at bond 842-Tyr-|-Met-843 within the A2 domain.. With respect to regulation, zinc and calcium ions cooperatively modulate enzyme activity. The cleavage of the pro-domain is not required for protease activity. Dependence on calcium for proteolytic activity is mediated by the high affinity site. Functionally, cleaves the vWF multimers in plasma into smaller forms thereby controlling vWF-mediated platelet thrombus formation. The polypeptide is A disintegrin and metalloproteinase with thrombospondin motifs 13 (Adamts13) (Mus musculus (Mouse)).